Here is a 555-residue protein sequence, read N- to C-terminus: Cinnamate beta-D-glucosyltransferase (555 aa).

The active-site Proton acceptor is His19. An an anthocyanidin-binding site is contributed by His19. Residues Gln344, His359, Trp362, Asn363, Ser364, and Glu367 each coordinate UDP-alpha-D-glucose. Gly382 is an an anthocyanidin binding site. UDP-alpha-D-glucose is bound by residues Asp383 and Gln384.

The protein belongs to the UDP-glycosyltransferase family. In terms of tissue distribution, highest expression detected in fruit, with lower levels detected in flower and petiole. Barely detectable in leaf and root.

It carries out the reaction (E)-cinnamate + UDP-alpha-D-glucose = 1-O-(trans-cinnamoyl)-beta-D-glucose + UDP. In terms of biological role, broad spectrum multifunctional glucosyltransferase. Catalyzes the formation of cinnamic acid and p-coumaric acid glucose esters during fruit ripening. Accepted substrates range from derivatives of cinnamic acid and benzoic acid to heterocyclic and aliphatic compounds, resulting in the formation of O- and S-glucose esters and O-glucosides. May also be involved in detoxification of xenobiotics. In Fragaria ananassa (Strawberry), this protein is Cinnamate beta-D-glucosyltransferase.